Consider the following 99-residue polypeptide: MAPKKPNKKNVIQRRPSAEKRILTAQKRELINHSFKSKVKTIVKKFEASLKLDDTQATLSNLQSVYSVVDKAVKRGIFKDNKAARIKSKATLKVNARAS.

Belongs to the bacterial ribosomal protein bS20 family.

Functionally, binds directly to 16S ribosomal RNA. This is Small ribosomal subunit protein bS20 from Chlamydia pneumoniae (Chlamydophila pneumoniae).